The sequence spans 176 residues: Translation initiation factor IF-3 (176 aa).

This sequence belongs to the IF-3 family. In terms of assembly, monomer.

Its subcellular location is the cytoplasm. In terms of biological role, IF-3 binds to the 30S ribosomal subunit and shifts the equilibrium between 70S ribosomes and their 50S and 30S subunits in favor of the free subunits, thus enhancing the availability of 30S subunits on which protein synthesis initiation begins. The chain is Translation initiation factor IF-3 from Streptococcus mutans serotype c (strain ATCC 700610 / UA159).